The following is a 144-amino-acid chain: Cystatin-F (144 aa).

The signal sequence occupies residues 1 to 18 (MWLAILLALCCLTSDTHG). The N-linked (GlcNAc...) asparagine glycan is linked to N61. The short motif at 80-84 (QVVKG) is the Secondary area of contact element. Cystine bridges form between C98-C109 and C123-C143.

It belongs to the cystatin family.

The protein localises to the secreted. Inhibits papain and cathepsin L but with affinities lower than other cystatins. May play a role in immune regulation through inhibition of a unique target in the hematopoietic system. This is Cystatin-F (Cst7) from Mus musculus (Mouse).